We begin with the raw amino-acid sequence, 153 residues long: UPF0102 protein Pnap_0271 (153 aa).

The protein belongs to the UPF0102 family.

This is UPF0102 protein Pnap_0271 from Polaromonas naphthalenivorans (strain CJ2).